The chain runs to 152 residues: Protein-export protein SecB (152 aa).

It belongs to the SecB family. In terms of assembly, homotetramer, a dimer of dimers. One homotetramer interacts with 1 SecA dimer.

It is found in the cytoplasm. In terms of biological role, one of the proteins required for the normal export of preproteins out of the cell cytoplasm. It is a molecular chaperone that binds to a subset of precursor proteins, maintaining them in a translocation-competent state. It also specifically binds to its receptor SecA. This chain is Protein-export protein SecB, found in Rickettsia bellii (strain RML369-C).